The following is a 367-amino-acid chain: MAIKTESFILNIGPQHPSTHGVFRLRLILDGEVITDLEPVFGYLHRGIEKLAEGRTYLQDIPFTDRLDYLGSMTNNHAYVMAVEKLAGITVPERAEYIRVILDELQRIASHLAGLGFFLNDLGALQTPLLYMFREREKIVELFDMCSGQRLNYNYYRFGGFVQDLPEEFLPALKKLLDTLPGFIDEYEQLISTNEIVLIRTKGVGVLKRELAINSSAAGPVLRASGVNWDIRRNDPYSIYDRFEFDIPTAQNGDTYDRYMVRIREMRQSVRILRQAVKDLPEGEIMGKAPKLLKPPAGEVYSRIEGPKGELGFYLVSDGTDKPYRWRVRPPCLLNLSALKDMVVGWKVADLMAIFGSIDIVMGEVDR.

It belongs to the complex I 49 kDa subunit family. In terms of assembly, NDH-1 is composed of 14 different subunits. Subunits NuoB, C, D, E, F, and G constitute the peripheral sector of the complex.

It is found in the cell membrane. It carries out the reaction a quinone + NADH + 5 H(+)(in) = a quinol + NAD(+) + 4 H(+)(out). NDH-1 shuttles electrons from NADH, via FMN and iron-sulfur (Fe-S) centers, to quinones in the respiratory chain. The immediate electron acceptor for the enzyme in this species is believed to be ubiquinone. Couples the redox reaction to proton translocation (for every two electrons transferred, four hydrogen ions are translocated across the cytoplasmic membrane), and thus conserves the redox energy in a proton gradient. This is NADH-quinone oxidoreductase subunit D from Dehalococcoides mccartyi (strain ATCC BAA-2266 / KCTC 15142 / 195) (Dehalococcoides ethenogenes (strain 195)).